The sequence spans 139 residues: Diacylglycerol acyltransferase/mycolyltransferase Ag85A (139 aa).

Serine 10 functions as the Nucleophile in the catalytic mechanism. The substrate site is built by serine 10 and aspartate 38. Glutamate 114 is a catalytic residue. Residues 116-119 (FVRT) and lysine 123 contribute to the substrate site.

It belongs to the mycobacterial A85 antigen family. In terms of assembly, homodimer.

Its subcellular location is the secreted. The protein localises to the cell wall. It localises to the cytoplasm. The catalysed reaction is an acyl-CoA + a 1,2-diacyl-sn-glycerol = a triacyl-sn-glycerol + CoA. It carries out the reaction 2 alpha,alpha'-trehalose 6-mycolate = alpha,alpha'-trehalose 6,6'-bismycolate + alpha,alpha-trehalose. The antigen 85 proteins (FbpA, FbpB, FbpC) are responsible for the high affinity of mycobacteria for fibronectin, a large adhesive glycoprotein, which facilitates the attachment of M.tuberculosis to murine alveolar macrophages (AMs). They also help to maintain the integrity of the cell wall by catalyzing the transfer of mycolic acids to cell wall arabinogalactan, and through the synthesis of alpha,alpha-trehalose dimycolate (TDM, cord factor). They catalyze the transfer of a mycoloyl residue from one molecule of alpha,alpha-trehalose monomycolate (TMM) to another TMM, leading to the formation of TDM. FbpA mediates triacylglycerol (TAG) formation with long-chain acyl-CoA as the acyl donor and 1,2-dipalmitoyl-sn-glycerol (1,2-dipalmitin) as the acyl acceptor. It has a preference for C26:0-CoA over C18:1-CoA. The chain is Diacylglycerol acyltransferase/mycolyltransferase Ag85A (fbpA) from Mycobacterium marinum.